The following is a 748-amino-acid chain: Phosphoenolpyruvate-dependent phosphotransferase system (748 aa).

Positions Met1–Val127 constitute a GAF domain. Residues Gln128–Arg170 are linker. Residues Ile171–Leu748 are PTS EI. His356 acts as the Tele-phosphohistidine intermediate in catalysis. Phosphoenolpyruvate is bound by residues Arg462 and Arg498. The Mg(2+) site is built by Glu597 and Asp621. Phosphoenolpyruvate contacts are provided by residues Asn620–Asp621 and Arg631. Cys668 (proton donor) is an active-site residue.

Belongs to the PEP-utilizing enzyme family. It depends on Mg(2+) as a cofactor.

Its subcellular location is the cytoplasm. The catalysed reaction is L-histidyl-[protein] + phosphoenolpyruvate = N(pros)-phospho-L-histidyl-[protein] + pyruvate. With respect to regulation, inhibited by GDP and FAD. In terms of biological role, component of the phosphoenolpyruvate-dependent nitrogen-metabolic phosphotransferase system (nitrogen-metabolic PTS), that seems to be involved in regulating nitrogen metabolism. Enzyme I-Ntr transfers the phosphoryl group from phosphoenolpyruvate (PEP) to the phosphoryl carrier protein (NPr). Could function in the transcriptional regulation of sigma-54 dependent operons in conjunction with the NPr (PtsO) and EIIA-Ntr (PtsN) proteins. Enzyme I-Ntr is specific for NPr. This Escherichia coli (strain K12) protein is Phosphoenolpyruvate-dependent phosphotransferase system (ptsP).